Consider the following 303-residue polypeptide: N-acetyl-D-glucosamine kinase (303 aa).

ATP is bound by residues 4–11 (GFDIGGTK) and 133–140 (GVGGGLIF). Residues H157, C177, C179, and C184 each contribute to the Zn(2+) site.

It belongs to the ROK (NagC/XylR) family. NagK subfamily.

It carries out the reaction N-acetyl-D-glucosamine + ATP = N-acetyl-D-glucosamine 6-phosphate + ADP + H(+). It participates in cell wall biogenesis; peptidoglycan recycling. In terms of biological role, catalyzes the phosphorylation of N-acetyl-D-glucosamine (GlcNAc) derived from cell-wall degradation, yielding GlcNAc-6-P. The protein is N-acetyl-D-glucosamine kinase of Escherichia coli (strain K12 / DH10B).